Reading from the N-terminus, the 162-residue chain is Peptidyl-prolyl cis-trans isomerase (162 aa).

Ser2 carries the N-acetylserine modification. Positions 5–161 constitute a PPIase cyclophilin-type domain; that stretch reads YFDVEADGQP…ARIVVAKSGE (157 aa). Glycyl lysine isopeptide (Lys-Gly) (interchain with G-Cter in ubiquitin) cross-links involve residues Lys29 and Lys42. Position 71 is a phosphothreonine (Thr71). Glycyl lysine isopeptide (Lys-Gly) (interchain with G-Cter in ubiquitin) cross-links involve residues Lys123 and Lys139. Ser142 and Ser145 each carry phosphoserine. Residues Lys151 and Lys158 each participate in a glycyl lysine isopeptide (Lys-Gly) (interchain with G-Cter in ubiquitin) cross-link.

It belongs to the cyclophilin-type PPIase family. PPIase A subfamily. Interacts with a complex composed of SIN3 and RPD3. Identified in the Set3C complex with HOS2, HST1, SNT1, SIF2, HOS4/YIL112W and SET3.

The protein localises to the cytoplasm. It is found in the nucleus. Its subcellular location is the mitochondrion intermembrane space. The enzyme catalyses [protein]-peptidylproline (omega=180) = [protein]-peptidylproline (omega=0). Its activity is regulated as follows. Binds cyclosporin A (CsA). CsA mediates some of its effects via an inhibitory action on PPIase. In terms of biological role, PPIases accelerate the folding of proteins. It catalyzes the cis-trans isomerization of proline imidic peptide bonds in oligopeptides. Involved in histone deacetylase complexes, suggesting a function in chromatin. Imports fructose-1,6-bisphosphatase (FBPase) into the intermediate vacuole import and degradation (Vid) vesicles. Regulates the meiotic gene program via the Set3C histone deacetylase complex to promote efficient sporulation, and the prolyl-isomerase activity is required for this function. This chain is Peptidyl-prolyl cis-trans isomerase (CPR1), found in Saccharomyces cerevisiae (strain ATCC 204508 / S288c) (Baker's yeast).